The sequence spans 38 residues: Large ribosomal subunit protein bL36 (38 aa).

It belongs to the bacterial ribosomal protein bL36 family.

The sequence is that of Large ribosomal subunit protein bL36 from Acholeplasma laidlawii (strain PG-8A).